The sequence spans 218 residues: Sec-independent protein translocase protein TatB (218 aa).

A helical membrane pass occupies residues 1–21 (MFDIGFSELLLVLVIGLVVLG). Disordered stretches follow at residues 126 to 145 (AESATKAQASPQAPATDVDK) and 174 to 218 (SSVD…GGDR). The segment covering 199–218 (HSTDSHGADQPRTHQPGGDR) has biased composition (basic and acidic residues).

Belongs to the TatB family. As to quaternary structure, the Tat system comprises two distinct complexes: a TatABC complex, containing multiple copies of TatA, TatB and TatC subunits, and a separate TatA complex, containing only TatA subunits. Substrates initially bind to the TatABC complex, which probably triggers association of the separate TatA complex to form the active translocon.

It localises to the cell inner membrane. In terms of biological role, part of the twin-arginine translocation (Tat) system that transports large folded proteins containing a characteristic twin-arginine motif in their signal peptide across membranes. Together with TatC, TatB is part of a receptor directly interacting with Tat signal peptides. TatB may form an oligomeric binding site that transiently accommodates folded Tat precursor proteins before their translocation. This is Sec-independent protein translocase protein TatB from Yersinia enterocolitica serotype O:8 / biotype 1B (strain NCTC 13174 / 8081).